A 220-amino-acid polypeptide reads, in one-letter code: Vesicle-associated membrane protein 7 (220 aa).

Ala-2 is modified (N-acetylalanine). Over 2–188 the chain is Cytoplasmic; that stretch reads AILFAVVARG…ARAMCMKNLK (187 aa). The Longin domain maps to 7-110; it reads VVARGTTILA…AMNSEFSSVL (104 aa). The region spanning 125-185 is the v-SNARE coiled-coil homology domain; that stretch reads KVMETQAQVD…RNLARAMCMK (61 aa). A phosphoserine mark is found at Ser-167 and Ser-168. Residues 189 to 209 traverse the membrane as a helical; Anchor for type IV membrane protein segment; sequence LTIIIIIISVVFIYIIVSPLC. Topologically, residues 210-220 are vesicular; the sequence is GGFTWPNCVKK.

This sequence belongs to the synaptobrevin family. Component of the SNARE complex composed of STX4, SNAP23 and VAMP7 that binds SYT7 during lysosomal exocytosis. Component of the SNARE complex composed of STX7, STX8, VAMP7 and VTI1B that is required for heterotypic fusion of late endosomes with lysosomes. May interact with STX17. Interacts with PICALM. Interacts with RAB21.

It localises to the cytoplasmic vesicle. It is found in the secretory vesicle membrane. The protein localises to the golgi apparatus. The protein resides in the trans-Golgi network membrane. Its subcellular location is the late endosome membrane. It localises to the lysosome membrane. It is found in the endoplasmic reticulum membrane. The protein localises to the phagosome membrane. The protein resides in the synapse. Its subcellular location is the synaptosome. In terms of biological role, involved in the targeting and/or fusion of transport vesicles to their target membrane during transport of proteins from the early endosome to the lysosome. Required for heterotypic fusion of late endosomes with lysosomes and homotypic lysosomal fusion. Required for calcium regulated lysosomal exocytosis. Involved in the export of chylomicrons from the endoplasmic reticulum to the cis Golgi. Required for exocytosis of mediators during eosinophil and neutrophil degranulation, and target cell killing by natural killer cells. Required for focal exocytosis of late endocytic vesicles during phagosome formation. The chain is Vesicle-associated membrane protein 7 (VAMP7) from Bos taurus (Bovine).